The sequence spans 231 residues: Quercetin 2,3-dioxygenase (231 aa).

4 residues coordinate a divalent metal cation: H57, H59, H101, and E103.

The protein belongs to the pirin family. Zn(2+) serves as cofactor. Co(2+) is required as a cofactor. Requires Fe(2+) as cofactor.

It carries out the reaction quercetin + O2 = 2-(3,4-dihydroxybenzoyloxy)-4,6-dihydroxybenzoate + CO. The protein operates within flavonoid metabolism; quercetin degradation. Its function is as follows. Has quercetin 2,3-dioxygenase activity in vitro. Its physiological role is unknown; however, may provide a mechanism that would avoid inhibition of key cellular proteins, such as DNA gyrase, by quercetin. This chain is Quercetin 2,3-dioxygenase (yhhW), found in Escherichia coli O157:H7.